The following is a 527-amino-acid chain: Berberine bridge enzyme-like 10 (527 aa).

Positions 1-20 are cleaved as a signal peptide; the sequence is MEKLLVISLLLLISTSVTTS. Residues C32 and C95 are joined by a disulfide bond. N53 carries N-linked (GlcNAc...) asparagine glycosylation. An FAD-binding PCMH-type domain is found at 73 to 248; sequence TTPKPISVVA…LGYKIQLVPV (176 aa). A Pros-8alpha-FAD histidine modification is found at H110. Residues N137 and N293 are each glycosylated (N-linked (GlcNAc...) asparagine).

It belongs to the oxygen-dependent FAD-linked oxidoreductase family. FAD is required as a cofactor.

The protein resides in the secreted. It is found in the cell wall. The polypeptide is Berberine bridge enzyme-like 10 (Arabidopsis thaliana (Mouse-ear cress)).